We begin with the raw amino-acid sequence, 284 residues long: MKHLVVNIGDIQAANDLPFVLFGGMNVLESRDLAMRICEHYVTVTEKLGIPYVFKASFDKANRSSIHSYRGPGLDEGMKIFSELKAQFGVKVITDVHEAGQAQSVADVVDVIQLPAFLARQTDLVEAMARTGAVINVKKPQFISPGQVGNIVDKFREAGNHQVILCDRGSNFGYDNLVVDMLGFNVMKQVSGGCPVIFDVTHALQTRDPFGAASGGRRAQVSELARAGMAVGIAGLFIEAHPDPANAKCDGPSALPIAKLEPFLRQMKAIDELVKSFPELDTGH.

The protein belongs to the KdsA family.

Its subcellular location is the cytoplasm. It catalyses the reaction D-arabinose 5-phosphate + phosphoenolpyruvate + H2O = 3-deoxy-alpha-D-manno-2-octulosonate-8-phosphate + phosphate. Its pathway is carbohydrate biosynthesis; 3-deoxy-D-manno-octulosonate biosynthesis; 3-deoxy-D-manno-octulosonate from D-ribulose 5-phosphate: step 2/3. The protein operates within bacterial outer membrane biogenesis; lipopolysaccharide biosynthesis. The polypeptide is 2-dehydro-3-deoxyphosphooctonate aldolase (Sodalis glossinidius (strain morsitans)).